Reading from the N-terminus, the 200-residue chain is MKWRHDYMAEKKVEDLEMDLNEEELEESEVNEDKEFEELDKSEEENEVEELISTLKDENEKLNNEMEALKDRLLRTTGEYDNYRKRTDREKEGLYASACEDVLKEILPVLDNLERAILAKGDIEDLKKGVDMTLKQFKDSFKNLGVEEISTENGFDPNLHDAVMHVEDSQYGEKEVVEVFLKGYKKGDKIIRHSMVKVAN.

The tract at residues 15-47 is disordered; sequence DLEMDLNEEELEESEVNEDKEFEELDKSEEENE. Over residues 16–47 the composition is skewed to acidic residues; sequence LEMDLNEEELEESEVNEDKEFEELDKSEEENE.

The protein belongs to the GrpE family. In terms of assembly, homodimer.

It is found in the cytoplasm. Participates actively in the response to hyperosmotic and heat shock by preventing the aggregation of stress-denatured proteins, in association with DnaK and GrpE. It is the nucleotide exchange factor for DnaK and may function as a thermosensor. Unfolded proteins bind initially to DnaJ; upon interaction with the DnaJ-bound protein, DnaK hydrolyzes its bound ATP, resulting in the formation of a stable complex. GrpE releases ADP from DnaK; ATP binding to DnaK triggers the release of the substrate protein, thus completing the reaction cycle. Several rounds of ATP-dependent interactions between DnaJ, DnaK and GrpE are required for fully efficient folding. This chain is Protein GrpE, found in Clostridium tetani (strain Massachusetts / E88).